A 417-amino-acid polypeptide reads, in one-letter code: MMMSCRNIDLGTSVLDHSCSSSSTSRRFLFGNSSKTVCMIGGRSCVGNLVFLRRDLATCRAVPAKSKENSLVNGIGQDQTVMLNLRQESRKPISLETLFEVVADDLQRLNDNLLSIVGAENPVLISAAEQIFSAGGKRMRPGLVFLVSRATAELAGLKELTVEHRRLGEIIEMIHTASLIHDDVLDESDMRRGRETVHELFGTRVAVLAGDFMFAQASWYLANLENLEVIKLISQVIKDFASGEIKQASSLFDCDVKLDDYMLKSYYKTASLVAASTKGAAIFSKVESKVAEQMYQFGKNLGLSFQVVDDILDFTQSTEQLGKPAANDLAKGNITAPVIFALENEPRLREIIESEFCEPGSLEEAIEIVRNRGGIKKAQELAKEKAELALKNLNCLPRSGFRSALEDMVMFNLERID.

A chloroplast-targeting transit peptide spans 1-60 (MMMSCRNIDLGTSVLDHSCSSSSTSRRFLFGNSSKTVCMIGGRSCVGNLVFLRRDLATCR). Residues K137, R140, and H175 each contribute to the isopentenyl diphosphate site. D182 and D186 together coordinate Mg(2+). Residue R191 participates in an all-trans-polyprenyl diphosphate binding. Residue R192 participates in isopentenyl diphosphate binding. 4 residues coordinate an all-trans-polyprenyl diphosphate: K268, T269, Q306, and K323.

It belongs to the FPP/GGPP synthase family. Homodimer. Interacts with FBN5. Mg(2+) is required as a cofactor. As to expression, higher expression in leaves than in roots.

Its subcellular location is the plastid. The protein localises to the chloroplast. The enzyme catalyses 5 isopentenyl diphosphate + (2E,6E,10E)-geranylgeranyl diphosphate = all-trans-nonaprenyl diphosphate + 5 diphosphate. Involved in providing solanesyl diphosphate for plastoquinone-9 (PQ-9) formation in plastids. Catalyzes the elongation of the prenyl side chain of PQ-9 in plastids. Contributes to the biosynthesis of plastochromanol-8 (PC-8) in plastids. Does not contribute to the synthesis of tocopherol or ubiquinone. PQ-9 and PC-8 are lipophilic antioxidants that act as protectant against photooxidative stress under high light stress conditions. Prefers geranylgeranyl diphosphate to farnesyl diphosphate as substrate. No activity with geranyl diphosphate or dimethylallyl diphosphate as substrate. This is Solanesyl diphosphate synthase 2, chloroplastic from Arabidopsis thaliana (Mouse-ear cress).